Reading from the N-terminus, the 502-residue chain is MKIRMRKKWMALPLAAMMIAGCSHSETSNSASGSKDTIKIMAPLLSPESPSDKSPSLKALEKYTGKEIKVTWVPDSSYNDKFNIVMASGEMPHAIVIKDKSAGFIKSVKAGAFWELSPYLKDYKNLSQADEKILKNSSVNGEVYGIYRTRDLIRACMIIRTDWLKNVGLDMPETLDDFYEVLKAFKEKDPDGNGKDDTYGMVVPKWMGLGNGSPWDVLQIWFGAPNRYGVENGKLIPDFTTKEYMDALTFFKKLYDEGLINKDFAVMDSAKWNDPVVKGKAGVIVDTGSRASQIQSAMEEADESNKDIIDIVGSLEGPNGKRTFPTSGYSGMITIPKSSVKTEKELKEVLSFLDKMNDKEAQILTNNGVKGRNYELKDGVFTSLEKNNKSLLYEHEGLAQFSMSIPKSEYYIEDQKTKLFQHRKDIITEGEKIAVFNPAESLVSDVYTQKGAQLDNIILDARTQFIIGEIDEKGFDDAVELWKKSGGNELMKDLNKLYQSSK.

The N-terminal stretch at M1–G21 is a signal peptide. The N-palmitoyl cysteine moiety is linked to residue C22. C22 carries S-diacylglycerol cysteine lipidation.

Its subcellular location is the cell membrane. This chain is Lipoprotein LipO (lipO), found in Bacillus subtilis (strain 168).